A 1002-amino-acid chain; its full sequence is Calcium-transporting ATPase sarcoplasmic/endoplasmic reticulum type (1002 aa).

The Cytoplasmic segment spans residues 1-48 (MEDGHSKTVEQSLNFFGTDGERGLTLDQIKTNQAKYGPNELPTEEGKS). Residues 49–69 (IWQLVLEQFDDLLVKILLLAA) form a helical membrane-spanning segment. The Lumenal portion of the chain corresponds to 70–89 (IISFVLALFEEHEETFTAFV). Residues 90 to 110 (EPLVILLILIANAVVGVWQER) traverse the membrane as a helical segment. Residues 111-253 (NAESAIEALK…EIKTPLQQKL (143 aa)) are Cytoplasmic-facing. A helical transmembrane segment spans residues 254 to 273 (DEFGEQLSKVISVICVAVWA). Topologically, residues 274–295 (INIGHFNDPAHGGSWIKGAIYY) are lumenal. A helical transmembrane segment spans residues 296 to 313 (FKIAVALAVAAIPEGLPA). Ca(2+) is bound by residues Val304, Ala305, Ile307, and Glu309. Residues 314–757 (VITTCLALGT…EEGRAIYNNM (444 aa)) lie on the Cytoplasmic side of the membrane. Asp351 serves as the catalytic 4-aspartylphosphate intermediate. Mg(2+) is bound by residues Asp703 and Asp707. A helical transmembrane segment spans residues 758–777 (KQFIRYLISSNIGEVVSIFL). Asn768 and Glu771 together coordinate Ca(2+). At 778 to 787 (TAALGLPEAL) the chain is on the lumenal side. Residues 788–808 (IPVQLLWVNLVTDGLPATALG) traverse the membrane as a helical segment. Asn796, Thr799, and Asp800 together coordinate Ca(2+). The Cytoplasmic portion of the chain corresponds to 809 to 828 (FNPPDLDIMDKPPRKADEGL). A helical membrane pass occupies residues 829–851 (ISGWLFFRYMAIGFYVGAATVGA). The Lumenal segment spans residues 852–897 (AAWWFIASSEGPGLTYWQLTHHLSCLGGGDEFKGVDCKIFSDPKAM). The helical transmembrane segment at 898-917 (TMALSVLVTIEMLNAMNSLS) threads the bilayer. Position 908 (Glu908) interacts with Ca(2+). The Cytoplasmic segment spans residues 918 to 930 (ENQSLISMPPWCN). Residues 931–949 (LWLIGSMALSFTLHFVILY) form a helical membrane-spanning segment. Over 950-964 (VDVLSTVFQVTPLSA) the chain is Lumenal. A helical transmembrane segment spans residues 965–985 (EEWITVMKFSIPVVLLDETLK). Over 986 to 1002 (FVARKIADVPDAVVDKW) the chain is Cytoplasmic.

The protein belongs to the cation transport ATPase (P-type) (TC 3.A.3) family.

The protein localises to the endoplasmic reticulum membrane. It is found in the sarcoplasmic reticulum membrane. It carries out the reaction Ca(2+)(in) + ATP + H2O = Ca(2+)(out) + ADP + phosphate + H(+). Its function is as follows. This magnesium-dependent enzyme catalyzes the hydrolysis of ATP coupled with the transport of calcium. This Drosophila pseudoobscura pseudoobscura (Fruit fly) protein is Calcium-transporting ATPase sarcoplasmic/endoplasmic reticulum type.